A 51-amino-acid chain; its full sequence is Large ribosomal subunit protein eL39z/eL39x (51 aa).

A disordered region spans residues 1–21 (MPSHKSFMIKKKLGKKMRQNR). Over residues 7–19 (FMIKKKLGKKMRQ) the composition is skewed to basic residues.

It belongs to the eukaryotic ribosomal protein eL39 family.

In Arabidopsis thaliana (Mouse-ear cress), this protein is Large ribosomal subunit protein eL39z/eL39x (RPL39A).